Here is a 270-residue protein sequence, read N- to C-terminus: HTH-type transcriptional repressor DrrR1 (270 aa).

The segment covering 1–11 has biased composition (low complexity); sequence MESGTSRTSDT. Residues 1 to 28 are disordered; the sequence is MESGTSRTSDTGGTGRAGSTETSGSGDI. The 61-residue stretch at 49–109 folds into the HTH tetR-type domain; sequence TLTLDRVVEA…LMLDRVQRPS (61 aa). The H-T-H motif DNA-binding region spans 72–91; it reads SMRRVAAELGTGTMSLYRYV.

Its subcellular location is the cytoplasm. Daunorubicin and doxorubicin can induce dissociation of DrrR1 from its DNA complex. Ampicillin cannot release DrrR1 from the DNA complex at the same concentrations. Its function is as follows. Transcriptional regulator that modulates the expression of the drrA2-drrB2 genes, which encode an ABC transporter involved in daunorubicin efflux, in response to intracellular daunorubicin/doxorubicin accumulation. In the absence of daunorubicin or doxorubicin, binds directly to the drrA2-drrB2 promoter region and negatively regulates expression of the genes. In the presence of daunorubicin or doxorubicin, DrrR1 dissociates from DNA, leading to the transcription of the genes. This Streptomyces coeruleorubidus protein is HTH-type transcriptional repressor DrrR1.